The following is a 258-amino-acid chain: Synapse differentiation-inducing gene protein 1 (258 aa).

The Cytoplasmic portion of the chain corresponds to 1–181 (MDGIIEQKSM…NFLMMPPRDH (181 aa)). Ser137 carries the post-translational modification Phosphoserine. A helical transmembrane segment spans residues 182 to 202 (LGLSVFSMLCCFWPLGIAAFY). Over 203–228 (LSHETNKAVAKGDLHQASTSSRRALF) the chain is Extracellular. Residues 229-249 (LAVLSITIGTGVYVGVAVALI) constitute an intramembrane region (helical). The Extracellular portion of the chain corresponds to 250 to 258 (AYLSKNNHL).

Belongs to the CD225/Dispanin family. In terms of assembly, homodimer. Interacts with GRIA1 and GRIA2.

Its subcellular location is the cell membrane. It localises to the early endosome membrane. The protein resides in the postsynaptic density membrane. The protein localises to the synapse. It is found in the cell projection. Its subcellular location is the dendrite. It localises to the dendritic spine. In terms of biological role, may regulate AMPA receptor content at nascent synapses, and have a role in postsynaptic development and maturation. The sequence is that of Synapse differentiation-inducing gene protein 1 (SYNDIG1) from Homo sapiens (Human).